The primary structure comprises 289 residues: ATP synthase gamma chain (289 aa).

This sequence belongs to the ATPase gamma chain family. As to quaternary structure, F-type ATPases have 2 components, CF(1) - the catalytic core - and CF(0) - the membrane proton channel. CF(1) has five subunits: alpha(3), beta(3), gamma(1), delta(1), epsilon(1). CF(0) has three main subunits: a, b and c.

It is found in the cell inner membrane. Produces ATP from ADP in the presence of a proton gradient across the membrane. The gamma chain is believed to be important in regulating ATPase activity and the flow of protons through the CF(0) complex. The polypeptide is ATP synthase gamma chain (Coxiella burnetii (strain CbuK_Q154) (Coxiella burnetii (strain Q154))).